The following is a 38-amino-acid chain: Large ribosomal subunit protein bL36 (38 aa).

Belongs to the bacterial ribosomal protein bL36 family.

This is Large ribosomal subunit protein bL36 from Synechocystis sp. (strain ATCC 27184 / PCC 6803 / Kazusa).